Reading from the N-terminus, the 300-residue chain is B1 kinase (300 aa).

Positions 16–282 (WVVGPLIGKG…ITMVNSLTYF (267 aa)) constitute a Protein kinase domain. ATP-binding positions include 22–30 (IGKGGFGSI) and K45. Residue D147 is the Proton acceptor of the active site.

The protein belongs to the protein kinase superfamily. Ser/Thr protein kinase family. Poxviruses subfamily. As to quaternary structure, interacts with host JIP1; this interaction increases the amount of MAPK bound to JIP1 and subsequently increases the activity of transcription factors, such as JUN, that respond to these complexes. Interacts with protein OPG198; this interaction inhibits the repressive activity of OPG198 pseudokinase on viral replication factory formation. Requires Mg(2+) as cofactor. In terms of processing, autophosphorylated.

The protein resides in the virion. Its subcellular location is the host cytoplasm. It catalyses the reaction L-seryl-[protein] + ATP = O-phospho-L-seryl-[protein] + ADP + H(+). The enzyme catalyses L-threonyl-[protein] + ATP = O-phospho-L-threonyl-[protein] + ADP + H(+). In terms of biological role, essential serine/threonine-protein kinase that plays different role in the viral life cycle. Phosphorylates the host small ribosomal protein RACK1 thereby customizing the ribosomes to a state optimal for viral mRNAs (which contain poly-A leaders) but not for host mRNAs. Facilitates viral DNA replication by inhibiting host BANF1, a cellular host defense responsive to foreign DNA. Phosphorylates host BANF1 on serine and threonine residues; this leads to BANF1 relocalization to the cytoplasm, loss of dimerization and impaired DNA binding activity. Indeed, BANF1 activity depends on its DNA-binding property which is blocked by VPK1-mediated phosphorylation. Required for viral intermediate genes expression, probably by inhibiting host BANF1. Modulates cellular responses via host JUN by two different mechanisms, either by direct phosphorylation or by modulation of upstream JIP1-MAPK complexes. Seems to participate in the accumulation/processing of late proteins and thus in virion maturation. In addition, inhibits B12 repressive activity on viral DNA replication via a phosphorylation-dependent mechanism. The sequence is that of B1 kinase (OPG187) from Homo sapiens (Human).